Here is a 331-residue protein sequence, read N- to C-terminus: Ribosomal RNA small subunit methyltransferase H (331 aa).

S-adenosyl-L-methionine is bound by residues 38–40, Asp56, Phe83, Asp100, and Gln107; that span reads GGY. Residues 287–331 are disordered; it reads DEAELAENPRARSARLRVGVRTDAPAGKVDPQALGTPLIPKKGRR.

This sequence belongs to the methyltransferase superfamily. RsmH family.

The protein resides in the cytoplasm. The catalysed reaction is cytidine(1402) in 16S rRNA + S-adenosyl-L-methionine = N(4)-methylcytidine(1402) in 16S rRNA + S-adenosyl-L-homocysteine + H(+). Specifically methylates the N4 position of cytidine in position 1402 (C1402) of 16S rRNA. This chain is Ribosomal RNA small subunit methyltransferase H, found in Cereibacter sphaeroides (strain KD131 / KCTC 12085) (Rhodobacter sphaeroides).